We begin with the raw amino-acid sequence, 375 residues long: Dual-specificity RNA methyltransferase RlmN (375 aa).

Glu98 serves as the catalytic Proton acceptor. The 241-residue stretch at 106–346 (GGKRRTLCVS…VRTTRGDDID (241 aa)) folds into the Radical SAM core domain. A disulfide bridge links Cys113 with Cys349. The [4Fe-4S] cluster site is built by Cys120, Cys124, and Cys127. S-adenosyl-L-methionine is bound by residues 174–175 (GE), Ser206, 228–230 (SLH), and Asn306. Cys349 acts as the S-methylcysteine intermediate in catalysis.

The protein belongs to the radical SAM superfamily. RlmN family. Requires [4Fe-4S] cluster as cofactor.

Its subcellular location is the cytoplasm. The catalysed reaction is adenosine(2503) in 23S rRNA + 2 reduced [2Fe-2S]-[ferredoxin] + 2 S-adenosyl-L-methionine = 2-methyladenosine(2503) in 23S rRNA + 5'-deoxyadenosine + L-methionine + 2 oxidized [2Fe-2S]-[ferredoxin] + S-adenosyl-L-homocysteine. The enzyme catalyses adenosine(37) in tRNA + 2 reduced [2Fe-2S]-[ferredoxin] + 2 S-adenosyl-L-methionine = 2-methyladenosine(37) in tRNA + 5'-deoxyadenosine + L-methionine + 2 oxidized [2Fe-2S]-[ferredoxin] + S-adenosyl-L-homocysteine. Its function is as follows. Specifically methylates position 2 of adenine 2503 in 23S rRNA and position 2 of adenine 37 in tRNAs. m2A2503 modification seems to play a crucial role in the proofreading step occurring at the peptidyl transferase center and thus would serve to optimize ribosomal fidelity. This chain is Dual-specificity RNA methyltransferase RlmN, found in Chromohalobacter salexigens (strain ATCC BAA-138 / DSM 3043 / CIP 106854 / NCIMB 13768 / 1H11).